A 404-amino-acid chain; its full sequence is Calcium/calmodulin-dependent protein kinase cmkB (404 aa).

The Protein kinase domain maps to 18 to 279 (YKTGKTLGAG…AHQALQHPWI (262 aa)). ATP-binding positions include 24 to 32 (LGAGLYSVV) and lysine 47. Aspartate 141 acts as the Proton acceptor in catalysis. Threonine 179 is modified (phosphothreonine; by cmkC). The tract at residues 279-322 (INPPYDTTDDLGSGEDLLPNIKKNFNARRTLHKAIDTVRAINKL) is autoinhibitory domain. The segment at 301-323 (KNFNARRTLHKAIDTVRAINKLR) is calmodulin-binding. The disordered stretch occupies residues 336–404 (VDPKPEHVNG…WSRTAPRSER (69 aa)). 2 stretches are compositionally biased toward basic and acidic residues: residues 338–370 (PKPE…DSRS) and 379–389 (QIREQERKVKE).

The protein belongs to the protein kinase superfamily. CAMK Ser/Thr protein kinase family. CaMK subfamily. Phosphorylated by cmkC on Thr-179.

The enzyme catalyses L-seryl-[protein] + ATP = O-phospho-L-seryl-[protein] + ADP + H(+). It catalyses the reaction L-threonyl-[protein] + ATP = O-phospho-L-threonyl-[protein] + ADP + H(+). Its activity is regulated as follows. Activated by Ca(2+)/calmodulin. Binding of calmodulin results in conformational change that relieves intrasteric autoinhibition and allows phosphorylation of Thr-179 within the activation loop by cmkC. Functionally, calcium/calmodulin-dependent protein kinase that operates in the calcium-triggered CaMKK-CaMK1 signaling cascade. Required in G1-phase of the cell cycle for proper timing of the initial nuclear division after germination, but not for subsequent mitoses. Required for the normal temporal regulation of nimX activity. In Emericella nidulans (Aspergillus nidulans), this protein is Calcium/calmodulin-dependent protein kinase cmkB.